The following is a 324-amino-acid chain: Homoserine kinase (324 aa).

P100–A110 is an ATP binding site.

Belongs to the GHMP kinase family. Homoserine kinase subfamily.

The protein localises to the cytoplasm. It carries out the reaction L-homoserine + ATP = O-phospho-L-homoserine + ADP + H(+). It participates in amino-acid biosynthesis; L-threonine biosynthesis; L-threonine from L-aspartate: step 4/5. Its function is as follows. Catalyzes the ATP-dependent phosphorylation of L-homoserine to L-homoserine phosphate. The sequence is that of Homoserine kinase from Chlorobaculum tepidum (strain ATCC 49652 / DSM 12025 / NBRC 103806 / TLS) (Chlorobium tepidum).